Here is a 651-residue protein sequence, read N- to C-terminus: MVLTGPLQRESVSMAKRVSMLDQHKKSSCARVRVAVRLRPYMDEKDEAKATTVCVRGLDSQSLEIVNWRNQLETMQYQFDAFYGDSASQREIYMGSVCHILPHLLIGQNASVFAYGPTGAGKTHTMLGNPNQPGVIPRAVRDLLQMSRTAASAPENENWTYTINMSYVEIYQEKVMDLLEPKNKDLPIREDKDHNILIPGVTQKMINSFADFDEHFIPASQNRTVASTKLNDRSSRSHAVLLIKVQKSQQVVPFRQLTGKLYLIDLAGSEDNRRTGNQGIRLKESGAINSSLFTLSKVVDALNQGLPRIPYRDSKLTRLLQDSLGGSAHSVMITNIAPEQTYYFDTLTALNFAAKSKQIINKPFSQETTQTVVQPAMKRPREETGHIAGSQKRKKSKNDSTESSPNSSMDTAGKQKLNLATLDPAVVERLLKLDKILTEKGKKKAQLLSTPKRERMALLKKWEESQMEIERLKEKQKELEQKAMEAEARLEKSNNSDLSDSSVSENTFRAPLRGRNTSTAKVKKVLRVLPMQGNSQLQSTVEEGIPVFEKKKKKKQVTCEGLENQPTWEMNMRTDLLESGKERILKLLNTGSVKELKSLQRIGDKKAKLIIGWREVNGPFKNVEELACLEGISAKQVSSFIKANIMSSIAS.

A Kinesin motor domain is found at 31-359 (RVRVAVRLRP…LNFAAKSKQI (329 aa)). 116 to 123 (GPTGAGKT) is an ATP binding site. The tract at residues 366 to 413 (QETTQTVVQPAMKRPREETGHIAGSQKRKKSKNDSTESSPNSSMDTAG) is disordered. The span at 401-410 (TESSPNSSMD) shows a compositional bias: polar residues. Residues 452-498 (KRERMALLKKWEESQMEIERLKEKQKELEQKAMEAEARLEKSNNSDL) are a coiled coil. The Important for regulated proteolytic degradation signature appears at 561–564 (GLEN).

The protein belongs to the TRAFAC class myosin-kinesin ATPase superfamily. Kinesin family. Post-translationally, ubiquitinated, leading to its subsequent proteasomal degradation.

It localises to the nucleus. The protein localises to the cytoplasm. Its subcellular location is the cytoskeleton. Kinesin family member that is involved in spindle formation and the movements of chromosomes during mitosis and meiosis. Binds to microtubules and to DNA. The sequence is that of Kinesin-like protein KIF22-A (kif22-a) from Xenopus laevis (African clawed frog).